The primary structure comprises 98 residues: NADH-ubiquinone oxidoreductase chain 4L (98 aa).

3 helical membrane-spanning segments follow: residues 1-21 (MMPI…GTLI), 28-48 (STLL…AMLI), and 59-79 (APLI…ALLV).

Belongs to the complex I subunit 4L family. In terms of assembly, core subunit of respiratory chain NADH dehydrogenase (Complex I) which is composed of 45 different subunits.

The protein localises to the mitochondrion inner membrane. It catalyses the reaction a ubiquinone + NADH + 5 H(+)(in) = a ubiquinol + NAD(+) + 4 H(+)(out). Its function is as follows. Core subunit of the mitochondrial membrane respiratory chain NADH dehydrogenase (Complex I) which catalyzes electron transfer from NADH through the respiratory chain, using ubiquinone as an electron acceptor. Part of the enzyme membrane arm which is embedded in the lipid bilayer and involved in proton translocation. This Petaurus breviceps (Australian sugar glider) protein is NADH-ubiquinone oxidoreductase chain 4L (MT-ND4L).